The chain runs to 154 residues: Myoglobin (154 aa).

The Globin domain maps to 2-148 (GLSDGEWQLV…FRNDIAAKYK (147 aa)). Residue S4 is modified to Phosphoserine. H65 contacts nitrite. Position 65 (H65) interacts with O2. T68 bears the Phosphothreonine mark. Residue H94 participates in heme b binding.

The protein belongs to the globin family. Monomeric.

Its subcellular location is the cytoplasm. The protein resides in the sarcoplasm. It carries out the reaction Fe(III)-heme b-[protein] + nitric oxide + H2O = Fe(II)-heme b-[protein] + nitrite + 2 H(+). The enzyme catalyses H2O2 + AH2 = A + 2 H2O. In terms of biological role, monomeric heme protein which primary function is to store oxygen and facilitate its diffusion within muscle tissues. Reversibly binds oxygen through a pentacoordinated heme iron and enables its timely and efficient release as needed during periods of heightened demand. Depending on the oxidative conditions of tissues and cells, and in addition to its ability to bind oxygen, it also has a nitrite reductase activity whereby it regulates the production of bioactive nitric oxide. Under stress conditions, like hypoxia and anoxia, it also protects cells against reactive oxygen species thanks to its pseudoperoxidase activity. This is Myoglobin (MB) from Meles meles (Eurasian badger).